Consider the following 223-residue polypeptide: Ribose-5-phosphate isomerase A (223 aa).

Substrate contacts are provided by residues 26 to 29, 82 to 85, and 95 to 98; these read TGST, DGAD, and KGGG. Glutamate 104 serves as the catalytic Proton acceptor. Lysine 122 is a substrate binding site.

This sequence belongs to the ribose 5-phosphate isomerase family. Homodimer.

The catalysed reaction is aldehydo-D-ribose 5-phosphate = D-ribulose 5-phosphate. It functions in the pathway carbohydrate degradation; pentose phosphate pathway; D-ribose 5-phosphate from D-ribulose 5-phosphate (non-oxidative stage): step 1/1. Its function is as follows. Catalyzes the reversible conversion of ribose-5-phosphate to ribulose 5-phosphate. The chain is Ribose-5-phosphate isomerase A from Streptococcus agalactiae serotype III (strain NEM316).